A 676-amino-acid polypeptide reads, in one-letter code: Serine/threonine-protein kinase Haspin homolog ALK2 (676 aa).

The tract at residues 53-93 (HKGSAEDESQSFFTSSDSPTSKTRPVGKTIENDDYYGKRSS) is disordered. Positions 62–75 (QSFFTSSDSPTSKT) are enriched in polar residues. The KEN box signature appears at 116-118 (KEN). The short motif at 150-158 (RTPLRPISN) is the D box element. Residues 228-312 (SSRSVNDQDP…HKTSHSSLNK (85 aa)) form a disordered region. A compositionally biased stretch (polar residues) spans 232-259 (VNDQDPNFVQPKPTNSLQKKSSISSFHN). The region spanning 383–672 (LCDVKYILHD…TCGDLLSLKG (290 aa)) is the Protein kinase domain. Residues 389-397 (ILHDLREAQ) and Lys-430 contribute to the ATP site.

It belongs to the protein kinase superfamily. Ser/Thr protein kinase family. Haspin subfamily. Post-translationally, periodically phosphorylated during the cell cycle with a phosphorylation peak during mitosis and hyperphosphorylated after DNA damage.

The catalysed reaction is L-seryl-[protein] + ATP = O-phospho-L-seryl-[protein] + ADP + H(+). The enzyme catalyses L-threonyl-[protein] + ATP = O-phospho-L-threonyl-[protein] + ADP + H(+). Serine/threonine haspin-like protein kinase involved in cell cycle regulation. This chain is Serine/threonine-protein kinase Haspin homolog ALK2 (ALK2), found in Saccharomyces cerevisiae (strain ATCC 204508 / S288c) (Baker's yeast).